Here is a 211-residue protein sequence, read N- to C-terminus: Protein-L-isoaspartate O-methyltransferase (211 aa).

Serine 62 is a catalytic residue.

The protein belongs to the methyltransferase superfamily. L-isoaspartyl/D-aspartyl protein methyltransferase family.

The protein resides in the cytoplasm. It carries out the reaction [protein]-L-isoaspartate + S-adenosyl-L-methionine = [protein]-L-isoaspartate alpha-methyl ester + S-adenosyl-L-homocysteine. Catalyzes the methyl esterification of L-isoaspartyl residues in peptides and proteins that result from spontaneous decomposition of normal L-aspartyl and L-asparaginyl residues. It plays a role in the repair and/or degradation of damaged proteins. This is Protein-L-isoaspartate O-methyltransferase from Shewanella sp. (strain MR-4).